Consider the following 1083-residue polypeptide: Ubiquitin carboxyl-terminal hydrolase 28 (1083 aa).

The interval 60–82 is disordered; sequence DQRVKEPSHDTAATEPSEVEESA. Phosphoserine is present on S67. Residues 97–116 form the UIM domain; the sequence is DNKDDLQAAIALSLLESPNI. K99 is covalently cross-linked (Glycyl lysine isopeptide (Lys-Gly) (interchain with G-Cter in SUMO2)). Residues 162–656 form the USP domain; the sequence is VGLKNVGNTC…SAYCLMYIND (495 aa). C171 (nucleophile) is an active-site residue. Position 376 is a phosphoserine (S376). The segment at 483–539 is disordered; it reads DLTAKESSSPKSCSQNAEGSFSSPEDALPNSEVMNGPFTSPHSSLEMPAPPPAPRTV. The segment covering 487 to 505 has biased composition (polar residues); sequence KESSSPKSCSQNAEGSFSS. S556 carries the post-translational modification Phosphoserine. The active-site Proton acceptor is the H606. Positions 703 to 728 are disordered; the sequence is EEQSCKIPQMESSPNSSSQDFSTSQE. Low complexity predominate over residues 714–728; sequence SSPNSSSQDFSTSQE. A Phosphoserine modification is found at S720. The residue at position 1054 (T1054) is a Phosphothreonine.

Belongs to the peptidase C19 family. USP28 subfamily. As to quaternary structure, interacts with ZNF304. Interacts with PRKD1. Interacts with TP53BP1. Interacts with FBXW7; following DNA damage, dissociates from FBXW7 leading to degradation of MYC. In terms of processing, degraded upon nickel ion level or hypoxia exposure. Post-translationally, phosphorylated upon DNA damage at Ser-67 and Ser-720, by ATM or ATR. Phosphorylated by PRKD1.

The protein localises to the nucleus. Its subcellular location is the nucleoplasm. It catalyses the reaction Thiol-dependent hydrolysis of ester, thioester, amide, peptide and isopeptide bonds formed by the C-terminal Gly of ubiquitin (a 76-residue protein attached to proteins as an intracellular targeting signal).. Deubiquitinase involved in DNA damage response checkpoint and MYC proto-oncogene stability. Involved in DNA damage induced apoptosis by specifically deubiquitinating proteins of the DNA damage pathway such as CLSPN. Also involved in G2 DNA damage checkpoint, by deubiquitinating CLSPN, and preventing its degradation by the anaphase promoting complex/cyclosome (APC/C). In contrast, it does not deubiquitinate PLK1. Specifically deubiquitinates MYC in the nucleoplasm, leading to prevent MYC degradation by the proteasome: acts by specifically interacting with FBXW7 (FBW7alpha) in the nucleoplasm and counteracting ubiquitination of MYC by the SCF(FBXW7) complex. Deubiquitinates ZNF304, hence preventing ZNF304 degradation by the proteasome and leading to the activated KRAS-mediated promoter hypermethylation and transcriptional silencing of tumor suppressor genes (TSGs) in a subset of colorectal cancers (CRC) cells. The protein is Ubiquitin carboxyl-terminal hydrolase 28 (Usp28) of Rattus norvegicus (Rat).